Here is a 472-residue protein sequence, read N- to C-terminus: Serine/threonine-protein kinase ULK3 (472 aa).

The region spanning 14–270 (FILTERLGSG…FQDFFAHPWV (257 aa)) is the Protein kinase domain. ATP-binding positions include 20–28 (LGSGTYATV) and Lys44. Catalysis depends on Asp137, which acts as the Proton acceptor. Ser176 is modified (phosphoserine). Residues 281–347 (LAQATALVVE…VSRAEELKAI (67 aa)) form the MIT 1 domain. Residues Ser350 and Ser384 each carry the phosphoserine; by autocatalysis modification. The MIT 2 domain occupies 376–444 (LLAALEVASA…ARAEYLKEQI (69 aa)). The residue at position 464 (Ser464) is a Phosphoserine.

The protein belongs to the protein kinase superfamily. Ser/Thr protein kinase family. APG1/unc-51/ULK1 subfamily. As to quaternary structure, interacts (via protein kinase domain) with SUFU. In terms of processing, autophosphorylated. Autophosphorylation is blocked by interaction with SUFU.

The protein resides in the cytoplasm. The catalysed reaction is L-seryl-[protein] + ATP = O-phospho-L-seryl-[protein] + ADP + H(+). The enzyme catalyses L-threonyl-[protein] + ATP = O-phospho-L-threonyl-[protein] + ADP + H(+). Functionally, serine/threonine protein kinase that acts as a regulator of Sonic hedgehog (SHH) signaling and autophagy. Acts as a negative regulator of SHH signaling in the absence of SHH ligand: interacts with SUFU, thereby inactivating the protein kinase activity and preventing phosphorylation of GLI proteins (GLI1, GLI2 and/or GLI3). Positively regulates SHH signaling in the presence of SHH: dissociates from SUFU, autophosphorylates and mediates phosphorylation of GLI2, activating it and promoting its nuclear translocation. Phosphorylates in vitro GLI2, as well as GLI1 and GLI3, although less efficiently. Also acts as a regulator of autophagy: following cellular senescence, able to induce autophagy. In Rattus norvegicus (Rat), this protein is Serine/threonine-protein kinase ULK3 (Ulk3).